Reading from the N-terminus, the 268-residue chain is Ribonuclease P protein subunit p30 (268 aa).

Position 2 is an N-acetylalanine (Ala2). The segment at 247–268 (KPRPSEGDEDCLPASKKAKCEG) is disordered. The residue at position 251 (Ser251) is a Phosphoserine.

It belongs to the eukaryotic/archaeal RNase P protein component 3 family. Component of nuclear RNase P and RNase MRP ribonucleoproteins. RNase P consists of a catalytic RNA moiety and about 10 protein subunits; POP1, POP4, POP5, POP7, RPP14, RPP21, RPP25, RPP30, RPP38 and RPP40. Within the RNase P complex, POP1, POP7 and RPP25 form the 'finger' subcomplex, POP5, RPP14, RPP40 and homodimeric RPP30 form the 'palm' subcomplex, and RPP21, POP4 and RPP38 form the 'wrist' subcomplex. All subunits of the RNase P complex interact with the catalytic RNA. Several subunits of RNase P are also part of the RNase MRP complex. RNase MRP consists of a catalytic RNA moiety and about 8 protein subunits; POP1, POP7, RPP25, RPP30, RPP38, RPP40 and possibly also POP4 and POP5.

Its subcellular location is the nucleus. The protein localises to the nucleolus. Functionally, component of ribonuclease P, a ribonucleoprotein complex that generates mature tRNA molecules by cleaving their 5'-ends. Also a component of the MRP ribonuclease complex, which cleaves pre-rRNA sequences. The chain is Ribonuclease P protein subunit p30 (RPP30) from Homo sapiens (Human).